Here is a 228-residue protein sequence, read N- to C-terminus: Elongation factor 1-beta 1 (228 aa).

An N-acetylalanine modification is found at Ala2. Positions 14-65 constitute a GST C-terminal domain; it reads LKTLEEHLAGKTYISGDQLSVDDVKVYAAVLENPGDGFPNASKWYDSVASHL. The interval 75–139 is disordered; sequence GVRVGGGVAP…DTKKTKESGK (65 aa). A compositionally biased stretch (acidic residues) spans 95 to 115; that stretch reads PAADGDGDDDDDIDLFADETE. Residues 116 to 138 are compositionally biased toward basic and acidic residues; the sequence is DEKKAAEEREAAKKDTKKTKESG.

This sequence belongs to the EF-1-beta/EF-1-delta family. EF-1 is composed of 4 subunits: alpha, beta (1B-alpha=beta'), delta (1B-beta), and gamma (1B-gamma).

Its subcellular location is the cell membrane. Its function is as follows. EF-1-beta and EF-1-delta stimulate the exchange of GDP bound to EF-1-alpha to GTP. In Arabidopsis thaliana (Mouse-ear cress), this protein is Elongation factor 1-beta 1.